The sequence spans 244 residues: Large ribosomal subunit protein uL3 (244 aa).

The tract at residues 215–244 is disordered; that stretch reads KKPPRERRGFAGSSTVDPLKASKRAVAKKK. The segment covering 235 to 244 has biased composition (basic residues); it reads ASKRAVAKKK.

This sequence belongs to the universal ribosomal protein uL3 family. As to quaternary structure, part of the 50S ribosomal subunit. Forms a cluster with proteins L14 and L19.

Its function is as follows. One of the primary rRNA binding proteins, it binds directly near the 3'-end of the 23S rRNA, where it nucleates assembly of the 50S subunit. The protein is Large ribosomal subunit protein uL3 of Koribacter versatilis (strain Ellin345).